We begin with the raw amino-acid sequence, 530 residues long: Tetrahydroberberine oxidase (530 aa).

An N-terminal signal peptide occupies residues 1 to 24 (MSKMASSIFATFSLLSSLLPTSLA). A disulfide bridge links Cys-36 with Cys-94. The N-linked (GlcNAc...) asparagine glycan is linked to Asn-51. An FAD-binding PCMH-type domain is found at 72-246 (TTPKPNFIVT…LAWKIRLVPV (175 aa)). Positions 109–171 (HDFEGLSYVS…GVHAFPAGLC (63 aa)) form a cross-link, 6-(S-cysteinyl)-8alpha-(pros-histidyl)-FAD (His-Cys). A glycan (N-linked (GlcNAc...) asparagine) is linked at Asn-483.

Belongs to the oxygen-dependent FAD-linked oxidoreductase family. It depends on FAD as a cofactor. In terms of processing, the FAD cofactor is bound via a bicovalent 6-S-cysteinyl, 8alpha-N1-histidyl FAD linkage.

It carries out the reaction (S)-canadine + 2 O2 + H(+) = berberine + 2 H2O2. Its function is as follows. Catalyzes the oxidation of different tetrahydroprotoberberines, such as (S)-canadine, (S)-scoulerine and (S)-corypalmine. Catalyzes the oxidation of (S)-coreximine and (S)-tetrahydropalmatine. Catalyzes the oxidation of different 1-benzylisoquinoline alkaloids, such as (S)-norreticuline, (S)-nororientaline, (S)-coclaurine and (S)-norisoorientaline. Exhibits strict specificity for the (S)-enantiomer of tetrahydroprotoberbirines and 1-benzylisoquinoline alkaloids. The chain is Tetrahydroberberine oxidase from Berberis wilsoniae (Mrs Wilson's barberry).